A 359-amino-acid polypeptide reads, in one-letter code: Phospho-N-acetylmuramoyl-pentapeptide-transferase (359 aa).

A run of 10 helical transmembrane segments spans residues 23 to 43 (VAFF…IKWA), 68 to 88 (MGGI…GNLF), 92 to 112 (VLLG…DDYM), 126 to 146 (MKFF…LYIG), 165 to 185 (AFKI…VFLA), 198 to 218 (GLAT…VYVA), 235 to 255 (SGEL…FLWY), 262 to 282 (VFMG…MAIV), 287 to 307 (ILLL…ILQV), and 336 to 356 (KIIV…LLSL).

It belongs to the glycosyltransferase 4 family. MraY subfamily. Mg(2+) serves as cofactor.

The protein localises to the cell inner membrane. It catalyses the reaction UDP-N-acetyl-alpha-D-muramoyl-L-alanyl-gamma-D-glutamyl-meso-2,6-diaminopimeloyl-D-alanyl-D-alanine + di-trans,octa-cis-undecaprenyl phosphate = di-trans,octa-cis-undecaprenyl diphospho-N-acetyl-alpha-D-muramoyl-L-alanyl-D-glutamyl-meso-2,6-diaminopimeloyl-D-alanyl-D-alanine + UMP. The protein operates within cell wall biogenesis; peptidoglycan biosynthesis. Its function is as follows. Catalyzes the initial step of the lipid cycle reactions in the biosynthesis of the cell wall peptidoglycan: transfers peptidoglycan precursor phospho-MurNAc-pentapeptide from UDP-MurNAc-pentapeptide onto the lipid carrier undecaprenyl phosphate, yielding undecaprenyl-pyrophosphoryl-MurNAc-pentapeptide, known as lipid I. In Helicobacter hepaticus (strain ATCC 51449 / 3B1), this protein is Phospho-N-acetylmuramoyl-pentapeptide-transferase.